The sequence spans 247 residues: ATP synthase subunit a, chloroplastic (247 aa).

Helical transmembrane passes span 38–58, 95–115, 134–154, 199–219, and 220–240; these read QVLI…TIAV, VPFI…GALL, INTT…AGFT, LVVV…VMFL, and GLFT…AYIG.

It belongs to the ATPase A chain family. As to quaternary structure, F-type ATPases have 2 components, CF(1) - the catalytic core - and CF(0) - the membrane proton channel. CF(1) has five subunits: alpha(3), beta(3), gamma(1), delta(1), epsilon(1). CF(0) has four main subunits: a, b, b' and c.

Its subcellular location is the plastid. It is found in the chloroplast thylakoid membrane. Key component of the proton channel; it plays a direct role in the translocation of protons across the membrane. The chain is ATP synthase subunit a, chloroplastic from Liriodendron tulipifera (Tuliptree).